The following is a 90-amino-acid chain: UPF0223 protein SH1855 (90 aa).

Belongs to the UPF0223 family.

This chain is UPF0223 protein SH1855, found in Staphylococcus haemolyticus (strain JCSC1435).